The chain runs to 384 residues: 1-deoxy-D-xylulose 5-phosphate reductoisomerase (384 aa).

6 residues coordinate NADPH: T10, G11, S12, I13, K37, and N124. K125 is a 1-deoxy-D-xylulose 5-phosphate binding site. Position 126 (E126) interacts with NADPH. Position 150 (D150) interacts with Mn(2+). Residues S151, E152, S176, and H199 each coordinate 1-deoxy-D-xylulose 5-phosphate. A Mn(2+)-binding site is contributed by E152. G205 contacts NADPH. Residues S212, N217, K218, and E221 each coordinate 1-deoxy-D-xylulose 5-phosphate. Residue E221 participates in Mn(2+) binding.

The protein belongs to the DXR family. Requires Mg(2+) as cofactor. It depends on Mn(2+) as a cofactor.

It catalyses the reaction 2-C-methyl-D-erythritol 4-phosphate + NADP(+) = 1-deoxy-D-xylulose 5-phosphate + NADPH + H(+). It participates in isoprenoid biosynthesis; isopentenyl diphosphate biosynthesis via DXP pathway; isopentenyl diphosphate from 1-deoxy-D-xylulose 5-phosphate: step 1/6. Its function is as follows. Catalyzes the NADPH-dependent rearrangement and reduction of 1-deoxy-D-xylulose-5-phosphate (DXP) to 2-C-methyl-D-erythritol 4-phosphate (MEP). In Clostridium tetani (strain Massachusetts / E88), this protein is 1-deoxy-D-xylulose 5-phosphate reductoisomerase.